A 206-amino-acid polypeptide reads, in one-letter code: Small ribosomal subunit protein uS4 (206 aa).

The region spanning 96–156 (SRLDNVVYRM…EKSKKQVRIA (61 aa)) is the S4 RNA-binding domain.

The protein belongs to the universal ribosomal protein uS4 family. In terms of assembly, part of the 30S ribosomal subunit. Contacts protein S5. The interaction surface between S4 and S5 is involved in control of translational fidelity.

Its function is as follows. One of the primary rRNA binding proteins, it binds directly to 16S rRNA where it nucleates assembly of the body of the 30S subunit. In terms of biological role, with S5 and S12 plays an important role in translational accuracy. The polypeptide is Small ribosomal subunit protein uS4 (Laribacter hongkongensis (strain HLHK9)).